The primary structure comprises 59 residues: Photosystem II reaction center protein K (59 aa).

Residues 1 to 22 (MLNIFSLIGLNSALYSSSCFFA) constitute a propeptide that is removed on maturation. Residues 30 to 50 (FLSPIVDFMPVIPLLFFLLAF) traverse the membrane as a helical segment.

This sequence belongs to the PsbK family. PSII is composed of 1 copy each of membrane proteins PsbA, PsbB, PsbC, PsbD, PsbE, PsbF, PsbH, PsbI, PsbJ, PsbK, PsbL, PsbM, PsbT, PsbX, PsbY, PsbZ, Psb30/Ycf12, at least 3 peripheral proteins of the oxygen-evolving complex and a large number of cofactors. It forms dimeric complexes.

Its subcellular location is the plastid. The protein resides in the chloroplast thylakoid membrane. One of the components of the core complex of photosystem II (PSII). PSII is a light-driven water:plastoquinone oxidoreductase that uses light energy to abstract electrons from H(2)O, generating O(2) and a proton gradient subsequently used for ATP formation. It consists of a core antenna complex that captures photons, and an electron transfer chain that converts photonic excitation into a charge separation. This Silene latifolia (White campion) protein is Photosystem II reaction center protein K.